The following is a 477-amino-acid chain: Diacylglycerol O-acyltransferase 1-2 (477 aa).

The segment at 1-48 is disordered; sequence MAPPPSLAPDRGGGEPDDALRLRARAAAAAGDAPAPQQQQEQRHQEQQ. A compositionally biased stretch (basic and acidic residues) spans 12 to 21; that stretch reads GGGEPDDALR. Residues 25–40 are compositionally biased toward low complexity; the sequence is RAAAAAGDAPAPQQQQ. Transmembrane regions (helical) follow at residues 79–99, 123–143, 155–175, 182–202, 230–250, 263–283, and 319–339; these read HAGL…RLII, WPLL…LMVE, VVIL…VVVI, VLSG…LVSF, NIKW…TLCY, GWVV…GFII, and VWLC…AELL. The FYXDWWN motif signature appears at 346–352; that stretch reads FYKDWWN. The next 3 helical transmembrane spans lie at 387-407, 409-429, and 442-462; these read GVAI…CVAV, CHIF…LVFL, and VGNM…CVLL. H401 is an active-site residue.

The protein belongs to the membrane-bound acyltransferase family. Sterol o-acyltransferase subfamily.

It is found in the endoplasmic reticulum membrane. The catalysed reaction is an acyl-CoA + a 1,2-diacyl-sn-glycerol = a triacyl-sn-glycerol + CoA. It functions in the pathway glycerolipid metabolism; triacylglycerol biosynthesis. In terms of biological role, involved in triacylglycerol (TAG) synthesis. Catalyzes the acylation of the sn-3 hydroxy group of sn-1,2-diacylglycerol using acyl-CoA. The chain is Diacylglycerol O-acyltransferase 1-2 from Oryza sativa subsp. japonica (Rice).